A 433-amino-acid chain; its full sequence is Protein translocase subunit SecY (433 aa).

Helical transmembrane passes span 17-37 (IIFTIFMLIICRIGSFIPIPG), 71-91 (IFALAIMPYITASIIIQLMSV), 117-137 (LTVLLASFQAYGVALSLESMV), 141-161 (GPVVILAGFFFRVTTVITLVV), 184-204 (LIIFIGIISGVPSAIISMFEL), 212-232 (PLIAITVCIGVVLLIAIIIFF), 268-288 (GVIPPIFASSILLFPTTLANF), 310-330 (YILLYVVLIMFFSFFYTAIVF), 366-386 (LTVIGGLYLSIICVIPELLMN), and 388-408 (YVISLSLGGTSFLIVVNVVLD).

Belongs to the SecY/SEC61-alpha family. In terms of assembly, component of the Sec protein translocase complex. Heterotrimer consisting of SecY, SecE and SecG subunits. The heterotrimers can form oligomers, although 1 heterotrimer is thought to be able to translocate proteins. Interacts with the ribosome. Interacts with SecDF, and other proteins may be involved. Interacts with SecA.

The protein localises to the cell inner membrane. In terms of biological role, the central subunit of the protein translocation channel SecYEG. Consists of two halves formed by TMs 1-5 and 6-10. These two domains form a lateral gate at the front which open onto the bilayer between TMs 2 and 7, and are clamped together by SecE at the back. The channel is closed by both a pore ring composed of hydrophobic SecY resides and a short helix (helix 2A) on the extracellular side of the membrane which forms a plug. The plug probably moves laterally to allow the channel to open. The ring and the pore may move independently. In Rickettsia typhi (strain ATCC VR-144 / Wilmington), this protein is Protein translocase subunit SecY.